The chain runs to 178 residues: ATP synthase subunit delta (178 aa).

This sequence belongs to the ATPase delta chain family. In terms of assembly, F-type ATPases have 2 components, F(1) - the catalytic core - and F(0) - the membrane proton channel. F(1) has five subunits: alpha(3), beta(3), gamma(1), delta(1), epsilon(1). F(0) has three main subunits: a(1), b(2) and c(10-14). The alpha and beta chains form an alternating ring which encloses part of the gamma chain. F(1) is attached to F(0) by a central stalk formed by the gamma and epsilon chains, while a peripheral stalk is formed by the delta and b chains.

It localises to the cell inner membrane. F(1)F(0) ATP synthase produces ATP from ADP in the presence of a proton or sodium gradient. F-type ATPases consist of two structural domains, F(1) containing the extramembraneous catalytic core and F(0) containing the membrane proton channel, linked together by a central stalk and a peripheral stalk. During catalysis, ATP synthesis in the catalytic domain of F(1) is coupled via a rotary mechanism of the central stalk subunits to proton translocation. In terms of biological role, this protein is part of the stalk that links CF(0) to CF(1). It either transmits conformational changes from CF(0) to CF(1) or is implicated in proton conduction. The protein is ATP synthase subunit delta of Acinetobacter baumannii (strain AB307-0294).